The sequence spans 962 residues: Translation initiation factor IF-2 (962 aa).

Disordered stretches follow at residues 122 to 263 (EVGV…EPAR), 293 to 327 (TEEV…TRRK), and 341 to 362 (IAAQ…AKEP). The span at 156–173 (AVEPQTVVPPVAAPAAEV) shows a compositional bias: low complexity. Over residues 188 to 202 (KPPEEKETKVKHAEP) the composition is skewed to basic and acidic residues. The span at 244-256 (RPKKAKKRRRKKV) shows a compositional bias: basic residues. 2 stretches are compositionally biased toward basic and acidic residues: residues 308–327 (RPEE…TRRK) and 344–362 (QDDR…AKEP). Residues 455–624 (RRPPVITVMG…LLQAELLELK (170 aa)) enclose the tr-type G domain. A G1 region spans residues 464 to 471 (GHVDHGKT). 464-471 (GHVDHGKT) provides a ligand contact to GTP. Positions 489–493 (GITQH) are G2. The segment at 510–513 (DTPG) is G3. GTP contacts are provided by residues 510–514 (DTPGH) and 564–567 (NKVD). Residues 564–567 (NKVD) form a G4 region. Residues 600 to 602 (SAK) form a G5 region.

Belongs to the TRAFAC class translation factor GTPase superfamily. Classic translation factor GTPase family. IF-2 subfamily.

It localises to the cytoplasm. In terms of biological role, one of the essential components for the initiation of protein synthesis. Protects formylmethionyl-tRNA from spontaneous hydrolysis and promotes its binding to the 30S ribosomal subunits. Also involved in the hydrolysis of GTP during the formation of the 70S ribosomal complex. This Syntrophobacter fumaroxidans (strain DSM 10017 / MPOB) protein is Translation initiation factor IF-2.